A 429-amino-acid chain; its full sequence is Dihydroorotase (429 aa).

H59 and H61 together coordinate Zn(2+). Substrate-binding positions include 61-63 (HLR) and N93. The Zn(2+) site is built by K143, H171, H229, and D298. K143 carries the post-translational modification N6-carboxylysine. Residue D298 is part of the active site. Substrate is bound by residues H302 and 316–317 (AG).

The protein belongs to the metallo-dependent hydrolases superfamily. DHOase family. Class I DHOase subfamily. Zn(2+) serves as cofactor.

It carries out the reaction (S)-dihydroorotate + H2O = N-carbamoyl-L-aspartate + H(+). The protein operates within pyrimidine metabolism; UMP biosynthesis via de novo pathway; (S)-dihydroorotate from bicarbonate: step 3/3. In terms of biological role, catalyzes the reversible cyclization of carbamoyl aspartate to dihydroorotate. In Methanosphaera stadtmanae (strain ATCC 43021 / DSM 3091 / JCM 11832 / MCB-3), this protein is Dihydroorotase.